The primary structure comprises 476 residues: Adenosylhomocysteinase (476 aa).

Substrate-binding residues include Thr61, Asp140, and Glu200. Residue 201–203 (TTT) coordinates NAD(+). Substrate-binding residues include Lys230 and Asp234. NAD(+)-binding positions include Asn235, 264–269 (GYGDVG), Glu287, Asn322, 343–345 (IGH), and Asn389.

The protein belongs to the adenosylhomocysteinase family. It depends on NAD(+) as a cofactor.

It localises to the cytoplasm. It carries out the reaction S-adenosyl-L-homocysteine + H2O = L-homocysteine + adenosine. It participates in amino-acid biosynthesis; L-homocysteine biosynthesis; L-homocysteine from S-adenosyl-L-homocysteine: step 1/1. May play a key role in the regulation of the intracellular concentration of adenosylhomocysteine. In Acidovorax sp. (strain JS42), this protein is Adenosylhomocysteinase.